The sequence spans 1183 residues: Probable RNA-dependent RNA polymerase 4 (1183 aa).

This sequence belongs to the RdRP family. In terms of tissue distribution, expressed in shoot apical meristem (SAM) and panicles.

The enzyme catalyses RNA(n) + a ribonucleoside 5'-triphosphate = RNA(n+1) + diphosphate. Probably involved in the RNA silencing pathway and required for the generation of small interfering RNAs (siRNAs). The sequence is that of Probable RNA-dependent RNA polymerase 4 (RDR4) from Oryza sativa subsp. japonica (Rice).